A 179-amino-acid chain; its full sequence is uncharacterized protein (179 aa).

This is an uncharacterized protein from Mushroom bacilliform virus (isolate Australia/AUS LF-1) (MBV).